The following is a 156-amino-acid chain: ATP synthase subunit b (156 aa).

A helical transmembrane segment spans residues 7–29; the sequence is LFAQMVVFLVLAWFTMKFVWPPL.

It belongs to the ATPase B chain family. F-type ATPases have 2 components, F(1) - the catalytic core - and F(0) - the membrane proton channel. F(1) has five subunits: alpha(3), beta(3), gamma(1), delta(1), epsilon(1). F(0) has three main subunits: a(1), b(2) and c(10-14). The alpha and beta chains form an alternating ring which encloses part of the gamma chain. F(1) is attached to F(0) by a central stalk formed by the gamma and epsilon chains, while a peripheral stalk is formed by the delta and b chains.

It is found in the cell inner membrane. In terms of biological role, f(1)F(0) ATP synthase produces ATP from ADP in the presence of a proton or sodium gradient. F-type ATPases consist of two structural domains, F(1) containing the extramembraneous catalytic core and F(0) containing the membrane proton channel, linked together by a central stalk and a peripheral stalk. During catalysis, ATP synthesis in the catalytic domain of F(1) is coupled via a rotary mechanism of the central stalk subunits to proton translocation. Its function is as follows. Component of the F(0) channel, it forms part of the peripheral stalk, linking F(1) to F(0). This is ATP synthase subunit b from Burkholderia vietnamiensis (strain G4 / LMG 22486) (Burkholderia cepacia (strain R1808)).